A 457-amino-acid polypeptide reads, in one-letter code: 3-ketoacyl-CoA thiolase 5, peroxisomal (457 aa).

A peroxisome-targeting transit peptide spans 1-37 (MERAMERQKILLRHLNPVSSSNSSLKHEPSLLSPVNC). Residue Cys-137 is the Acyl-thioester intermediate of the active site. Active-site proton acceptor residues include His-394 and Cys-426.

Belongs to the thiolase-like superfamily. Thiolase family. As to quaternary structure, homodimer. As to expression, expressed in seedlings and wounded leaves.

The protein resides in the peroxisome. The catalysed reaction is an acyl-CoA + acetyl-CoA = a 3-oxoacyl-CoA + CoA. It functions in the pathway lipid metabolism; fatty acid metabolism. Probably involved in long chain fatty-acid beta-oxidation prior to gluconeogenesis during germination and subsequent seedling growth. Involved in systemic jasmonic acid (JA) biosynthesis after wounding and may be during senescence. The polypeptide is 3-ketoacyl-CoA thiolase 5, peroxisomal (KAT5) (Arabidopsis thaliana (Mouse-ear cress)).